The chain runs to 173 residues: Shikimate kinase 1 (173 aa).

Residue 14–19 participates in ATP binding; that stretch reads GAGKST. Ser-18 provides a ligand contact to Mg(2+). Asp-36, Arg-60, and Gly-82 together coordinate substrate. Arg-120 contacts ATP. Arg-140 is a substrate binding site. Gln-157 provides a ligand contact to ATP.

The protein belongs to the shikimate kinase family. Monomer. Mg(2+) serves as cofactor.

The protein localises to the cytoplasm. The enzyme catalyses shikimate + ATP = 3-phosphoshikimate + ADP + H(+). It functions in the pathway metabolic intermediate biosynthesis; chorismate biosynthesis; chorismate from D-erythrose 4-phosphate and phosphoenolpyruvate: step 5/7. Its function is as follows. Catalyzes the specific phosphorylation of the 3-hydroxyl group of shikimic acid using ATP as a cosubstrate. The sequence is that of Shikimate kinase 1 from Serratia proteamaculans (strain 568).